The chain runs to 899 residues: Gamma-aminobutyric acid type B receptor subunit 1 (899 aa).

An N-terminal signal peptide occupies residues 1–19 (MFVRSSWLLLWGTIVWASA). At 20-447 (EPVTLHIGGT…KKHAMTVSNE (428 aa)) the chain is on the extracellular side. 5 N-linked (GlcNAc...) asparagine glycosylation sites follow: asparagine 69, asparagine 266, asparagine 339, asparagine 353, and asparagine 371. Residues 448–468 (FYYPTILFAVLGIAACVFIYL) traverse the membrane as a helical segment. The Cytoplasmic portion of the chain corresponds to 469–487 (FTQKHHERLIIFQSQPECN). Residues 488-508 (NILLIGCSLCLFSLFLIGLPS) traverse the membrane as a helical segment. At 509-525 (DDISISESLFPLLCHAR) the chain is on the extracellular side. A helical transmembrane segment spans residues 526 to 546 (VTILLFGFTFAYGSMFAKVWI). The Cytoplasmic portion of the chain corresponds to 547-616 (VHRMGATENQ…LNQPISSSKF (70 aa)). Residues 617 to 637 (YVIVAALTAVDVFVCFVWVLI) traverse the membrane as a helical segment. Topologically, residues 638–674 (DPLHLTEQKFPLFTPADSEEDEMIMPVLQQCQSNQQE) are extracellular. The helical transmembrane segment at 675–695 (VWIGIIMGFKCLLLVFGTFLS) threads the bilayer. The Cytoplasmic portion of the chain corresponds to 696 to 713 (YETRNLKLRFINDSRFVG). Residues 714 to 734 (LAIYNVAVMTLVTAPVVTLLI) traverse the membrane as a helical segment. Residues 735–741 (HGKVDAN) are Extracellular-facing. Residues 742–762 (FAFISLTVLICTYISVGLIYG) form a helical membrane-spanning segment. Residues 763–899 (PKIRHIIKVP…SSTSSDEILL (137 aa)) are Cytoplasmic-facing. Residues 791 to 842 (KVDQKRYDMLKKENETLQIQIEEKERKIHECKERLEELTKNSETEDMNAQLL) adopt a coiled-coil conformation. The tract at residues 870 to 899 (DLQNGNHPGQIYENDNDDDGSSTSSDEILL) is disordered. Over residues 890-899 (SSTSSDEILL) the composition is skewed to low complexity.

This sequence belongs to the G-protein coupled receptor 3 family. May form a heterodimer with gbb-2. In terms of tissue distribution, expressed in the nervous system, including cholinergic motor neurons, but not in GABAergic motor neurons or muscle.

It localises to the cell membrane. In terms of biological role, component of a heterodimeric G-protein coupled receptor for GABA, formed by gbb-1 and gbb-2. Within the heterodimeric GABA receptor, only gbb-1 seems to bind agonists, while gbb-2 mediates coupling to G proteins. Ligand binding causes a conformation change that triggers signaling via guanine nucleotide-binding proteins (G proteins) and modulates the activity of down-stream effectors, such as adenylate cyclase. Signaling inhibits adenylate cyclase, stimulates phospholipase A2, activates potassium channels, inactivates voltage-dependent calcium-channels and modulates inositol phospholipid hydrolysis. Calcium is required for high affinity binding to GABA. Plays a critical role in the fine-tuning of inhibitory synaptic transmission. Pre-synaptic GABA receptor inhibits neurotransmitter release by down-regulating high-voltage activated calcium channels, whereas postsynaptic GABA receptor decreases neuronal excitability by activating a prominent inwardly rectifying potassium (Kir) conductance that underlies the late inhibitory postsynaptic potentials. Along with gbb-2, may couple to the G(o)-alpha G-protein goa-1 to negatively regulate cholinergic receptor activity in the presence of high levels of acetylcholine in ventral cord motor neurons. As acetylcholine depolarizes body wall muscles, modulation of acetylcholine levels most likely results in the control of locomotory behavior. Acts in neurons to regulate lifespan, and this may be through G-protein-egl-8/PLC-beta signaling to the transcription factor daf-16/FOXO. This chain is Gamma-aminobutyric acid type B receptor subunit 1, found in Caenorhabditis elegans.